Reading from the N-terminus, the 185-residue chain is Ribosome-recycling factor (185 aa).

The protein belongs to the RRF family.

Its subcellular location is the cytoplasm. In terms of biological role, responsible for the release of ribosomes from messenger RNA at the termination of protein biosynthesis. May increase the efficiency of translation by recycling ribosomes from one round of translation to another. In Chloroflexus aggregans (strain MD-66 / DSM 9485), this protein is Ribosome-recycling factor.